The chain runs to 72 residues: Protein kish-A (72 aa).

An N-terminal signal peptide occupies residues 1–26 (MSAIFNFQSLLTVILLLICTCAYIRS). Topologically, residues 27 to 53 (LTPSLLDKNKTGFLGIFWKCARIGERK) are extracellular. N-linked (GlcNAc...) asparagine glycosylation is present at Asn35. The chain crosses the membrane as a helical span at residues 54–71 (SPYVAFCCIVMALTILFS). Glu72 is a topological domain (cytoplasmic).

It belongs to the KISH family.

The protein resides in the golgi apparatus membrane. Involved in the early part of the secretory pathway. The polypeptide is Protein kish-A (tmem167a) (Danio rerio (Zebrafish)).